The chain runs to 327 residues: (-)-delta-cadinene synthase (327 aa).

Mg(2+)-binding residues include D84, D85, N222, T226, and E230.

This sequence belongs to the terpene synthase family.

The catalysed reaction is (2E,6E)-farnesyl diphosphate = (-)-delta-cadinene + diphosphate. Its function is as follows. Catalyzes the conversion of (2E,6E)-farnesyl diphosphate into (-)-delta-cadinene. Cyclization mechanism involves an intermediate nerolidyl diphosphate leading to a helminthogermacradienyl cation. This is (-)-delta-cadinene synthase from Streptomyces clavuligerus.